Here is a 547-residue protein sequence, read N- to C-terminus: Membrane protein insertase YidC (547 aa).

Transmembrane regions (helical) follow at residues 6 to 26 (LILV…WQKY), 328 to 348 (VVDY…LEAI), 351 to 371 (LVGN…AVFF), 425 to 445 (LPIL…LGAV), 459 to 479 (LASA…MFVQ), and 499 to 519 (PLIF…YWVV).

Belongs to the OXA1/ALB3/YidC family. Type 1 subfamily. In terms of assembly, interacts with the Sec translocase complex via SecD. Specifically interacts with transmembrane segments of nascent integral membrane proteins during membrane integration.

It localises to the cell inner membrane. Its function is as follows. Required for the insertion and/or proper folding and/or complex formation of integral membrane proteins into the membrane. Involved in integration of membrane proteins that insert both dependently and independently of the Sec translocase complex, as well as at least some lipoproteins. Aids folding of multispanning membrane proteins. The polypeptide is Membrane protein insertase YidC (Dechloromonas aromatica (strain RCB)).